Here is a 222-residue protein sequence, read N- to C-terminus: Leucyl/phenylalanyl-tRNA--protein transferase (222 aa).

Belongs to the L/F-transferase family.

It localises to the cytoplasm. It carries out the reaction N-terminal L-lysyl-[protein] + L-leucyl-tRNA(Leu) = N-terminal L-leucyl-L-lysyl-[protein] + tRNA(Leu) + H(+). It catalyses the reaction N-terminal L-arginyl-[protein] + L-leucyl-tRNA(Leu) = N-terminal L-leucyl-L-arginyl-[protein] + tRNA(Leu) + H(+). The enzyme catalyses L-phenylalanyl-tRNA(Phe) + an N-terminal L-alpha-aminoacyl-[protein] = an N-terminal L-phenylalanyl-L-alpha-aminoacyl-[protein] + tRNA(Phe). Functionally, functions in the N-end rule pathway of protein degradation where it conjugates Leu, Phe and, less efficiently, Met from aminoacyl-tRNAs to the N-termini of proteins containing an N-terminal arginine or lysine. This chain is Leucyl/phenylalanyl-tRNA--protein transferase, found in Legionella pneumophila (strain Paris).